Here is a 384-residue protein sequence, read N- to C-terminus: Spermidine/putrescine import ATP-binding protein PotA (384 aa).

An ABC transporter domain is found at Ile-6–Ile-238. An ATP-binding site is contributed by Gly-40–Ser-47.

The protein belongs to the ABC transporter superfamily. Spermidine/putrescine importer (TC 3.A.1.11.1) family. As to quaternary structure, the complex is composed of two ATP-binding proteins (PotA), two transmembrane proteins (PotB and PotC) and a solute-binding protein (PotD).

It is found in the cell membrane. It catalyses the reaction ATP + H2O + polyamine-[polyamine-binding protein]Side 1 = ADP + phosphate + polyamineSide 2 + [polyamine-binding protein]Side 1.. Its function is as follows. Part of the ABC transporter complex PotABCD involved in spermidine/putrescine import. Responsible for energy coupling to the transport system. The protein is Spermidine/putrescine import ATP-binding protein PotA of Streptococcus pyogenes serotype M18 (strain MGAS8232).